We begin with the raw amino-acid sequence, 828 residues long: Molybdenum cofactor sulfurase (828 aa).

An N6-(pyridoxal phosphate)lysine modification is found at Lys239. Cys402 is an active-site residue. The disordered stretch occupies residues Thr638 to Pro682. Residues Ala652 to Trp825 enclose the MOSC domain.

It belongs to the class-V pyridoxal-phosphate-dependent aminotransferase family. MOCOS subfamily. It depends on pyridoxal 5'-phosphate as a cofactor.

The catalysed reaction is Mo-molybdopterin + L-cysteine + AH2 = thio-Mo-molybdopterin + L-alanine + A + H2O. In terms of biological role, sulfurates the molybdenum cofactor. Sulfation of molybdenum is essential for xanthine dehydrogenase (XDH) and aldehyde oxidase (ADO) enzymes in which molybdenum cofactor is liganded by 1 oxygen and 1 sulfur atom in active form. The sequence is that of Molybdenum cofactor sulfurase from Aspergillus terreus (strain NIH 2624 / FGSC A1156).